The sequence spans 619 residues: Phosphomethylpyrimidine synthase (619 aa).

Over residues 93–104 (IKPEDNGLKGPD) the composition is skewed to basic and acidic residues. Positions 93–114 (IKPEDNGLKGPDRSGGVTPFPN) are disordered. Residues asparagine 217, methionine 246, tyrosine 275, histidine 311, 331–333 (SRG), 372–375 (DGLR), and glutamate 411 contribute to the substrate site. Position 415 (histidine 415) interacts with Zn(2+). Tyrosine 438 is a binding site for substrate. Histidine 479 contributes to the Zn(2+) binding site. [4Fe-4S] cluster contacts are provided by cysteine 559, cysteine 562, and cysteine 567.

Belongs to the ThiC family. Homodimer. It depends on [4Fe-4S] cluster as a cofactor.

It carries out the reaction 5-amino-1-(5-phospho-beta-D-ribosyl)imidazole + S-adenosyl-L-methionine = 4-amino-2-methyl-5-(phosphooxymethyl)pyrimidine + CO + 5'-deoxyadenosine + formate + L-methionine + 3 H(+). The protein operates within cofactor biosynthesis; thiamine diphosphate biosynthesis. Functionally, catalyzes the synthesis of the hydroxymethylpyrimidine phosphate (HMP-P) moiety of thiamine from aminoimidazole ribotide (AIR) in a radical S-adenosyl-L-methionine (SAM)-dependent reaction. The protein is Phosphomethylpyrimidine synthase of Rhizorhabdus wittichii (strain DSM 6014 / CCUG 31198 / JCM 15750 / NBRC 105917 / EY 4224 / RW1) (Sphingomonas wittichii).